Reading from the N-terminus, the 293-residue chain is Probable metal transport system membrane protein TC_0698 (293 aa).

A run of 7 helical transmembrane segments spans residues 18 to 38 (SLLA…YIVV), 41 to 61 (IVSI…IALW), 68 to 88 (LPIS…ICIG), 101 to 121 (IISM…SKLP), 142 to 162 (DLYF…ICHT), 186 to 206 (FLLL…MGVI), and 242 to 262 (FLGI…IAIL).

The protein belongs to the ABC-3 integral membrane protein family.

It localises to the cell inner membrane. In terms of biological role, part of an ATP-driven transport system TC_0696/TC_0697/TC_0698 for a metal. The polypeptide is Probable metal transport system membrane protein TC_0698 (Chlamydia muridarum (strain MoPn / Nigg)).